The chain runs to 322 residues: Cysteine protease YopT (322 aa).

Active-site residues include cysteine 139, histidine 258, and aspartate 274.

It belongs to the peptidase C58 family. In terms of assembly, interacts with human ARHA.

The protein resides in the secreted. Cysteine protease, which is translocated into infected cells and plays a central role in pathogenesis by cleaving the C-terminus end of the human small GTPase RhoA/ARHA, a regulator of cytoskeleton. Once cleaved, ARHA loses its lipid modification, and is released from the cell membrane, leading to the subsequent disruption of actin cytoskeleton of the host cell. In Yersinia pseudotuberculosis serotype I (strain IP32953), this protein is Cysteine protease YopT (yopT).